Here is a 130-residue protein sequence, read N- to C-terminus: Type VII secretion system extracellular protein C (130 aa).

The protein belongs to the EsxC family. In terms of assembly, forms both homodimers and heterodimers with EsxA. Homodimerization is calcium-dependent.

It localises to the secreted. Functionally, implements its pathogenic function during infection. This is Type VII secretion system extracellular protein C from Staphylococcus aureus (strain Mu50 / ATCC 700699).